Consider the following 57-residue polypeptide: Large ribosomal subunit protein bL32 (57 aa).

This sequence belongs to the bacterial ribosomal protein bL32 family.

This is Large ribosomal subunit protein bL32 from Bacillus licheniformis (strain ATCC 14580 / DSM 13 / JCM 2505 / CCUG 7422 / NBRC 12200 / NCIMB 9375 / NCTC 10341 / NRRL NRS-1264 / Gibson 46).